The chain runs to 318 residues: Trans-prenyltransferase (318 aa).

The helical transmembrane segment at Met1–Thr21 threads the bilayer. Lys85, Arg88, and His122 together coordinate isopentenyl diphosphate. Mg(2+)-binding residues include Asp129 and Asp135. A dimethylallyl diphosphate-binding site is contributed by Arg140. Residue Arg141 coordinates isopentenyl diphosphate. Dimethylallyl diphosphate contacts are provided by Lys216, Thr217, and Gln254.

It belongs to the FPP/GGPP synthase family. Asfivirus trans-prenyltransferase subfamily. The cofactor is Mg(2+).

The protein localises to the host endoplasmic reticulum. It localises to the host membrane. It carries out the reaction isopentenyl diphosphate + dimethylallyl diphosphate = (2E)-geranyl diphosphate + diphosphate. The enzyme catalyses isopentenyl diphosphate + (2E)-geranyl diphosphate = (2E,6E)-farnesyl diphosphate + diphosphate. The catalysed reaction is isopentenyl diphosphate + (2E,6E)-farnesyl diphosphate = (2E,6E,10E)-geranylgeranyl diphosphate + diphosphate. It catalyses the reaction isopentenyl diphosphate + (2E,6E,10E)-geranylgeranyl diphosphate = (2E,6E,10E,14E)-geranylfarnesyl diphosphate + diphosphate. The protein operates within isoprenoid biosynthesis; farnesyl diphosphate biosynthesis; farnesyl diphosphate from geranyl diphosphate and isopentenyl diphosphate: step 1/1. Its pathway is isoprenoid biosynthesis; geranyl diphosphate biosynthesis; geranyl diphosphate from dimethylallyl diphosphate and isopentenyl diphosphate: step 1/1. It participates in isoprenoid biosynthesis; geranylgeranyl diphosphate biosynthesis; geranylgeranyl diphosphate from farnesyl diphosphate and isopentenyl diphosphate: step 1/1. In terms of biological role, trans-prenyltransferase that catalyzes the sequential condensation of isopentenyl diphosphate (IPP) with different allylic diphosphates, such as dimethylallyl diphosphate (DMAPP), geranyl diphosphate (GPP), farnesyl diphosphate (FPP) and geranylgeranyl diphosphate (GGPP), farnesyl diphosphate being the best allylic substrate. The polypeptide is Trans-prenyltransferase (African swine fever virus (isolate Warthog/Namibia/Wart80/1980) (ASFV)).